Reading from the N-terminus, the 88-residue chain is Cytochrome c oxidase subunit 6B2 (88 aa).

Positions 1–21 (MLGVQAQMPAPGQWTTPPFDP) are disordered. The CHCH domain occupies 29-75 (TRNCYQNFLDYHRCVKTMDRRGKNTQACDYYFRVFHSLCPVSWVQRW). Residues 32 to 42 (CYQNFLDYHRC) carry the Cx9C motif motif. Intrachain disulfides connect cysteine 32–cysteine 67 and cysteine 42–cysteine 56. Positions 56–67 (CDYYFRVFHSLC) match the Cx10C motif motif.

Belongs to the cytochrome c oxidase subunit 6B family. In terms of assembly, component of the cytochrome c oxidase (complex IV, CIV), a multisubunit enzyme composed of 14 subunits. The complex is composed of a catalytic core of 3 subunits MT-CO1, MT-CO2 and MT-CO3, encoded in the mitochondrial DNA, and 11 supernumerary subunits COX4I, COX5A, COX5B, COX6A, COX6B, COX6C, COX7A, COX7B, COX7C, COX8 and NDUFA4, which are encoded in the nuclear genome. The complex exists as a monomer or a dimer and forms supercomplexes (SCs) in the inner mitochondrial membrane with NADH-ubiquinone oxidoreductase (complex I, CI) and ubiquinol-cytochrome c oxidoreductase (cytochrome b-c1 complex, complex III, CIII), resulting in different assemblies (supercomplex SCI(1)III(2)IV(1) and megacomplex MCI(2)III(2)IV(2)). In terms of tissue distribution, testis specific.

It localises to the mitochondrion inner membrane. It participates in energy metabolism; oxidative phosphorylation. In terms of biological role, component of the cytochrome c oxidase, the last enzyme in the mitochondrial electron transport chain which drives oxidative phosphorylation. The respiratory chain contains 3 multisubunit complexes succinate dehydrogenase (complex II, CII), ubiquinol-cytochrome c oxidoreductase (cytochrome b-c1 complex, complex III, CIII) and cytochrome c oxidase (complex IV, CIV), that cooperate to transfer electrons derived from NADH and succinate to molecular oxygen, creating an electrochemical gradient over the inner membrane that drives transmembrane transport and the ATP synthase. Cytochrome c oxidase is the component of the respiratory chain that catalyzes the reduction of oxygen to water. Electrons originating from reduced cytochrome c in the intermembrane space (IMS) are transferred via the dinuclear copper A center (CU(A)) of subunit 2 and heme A of subunit 1 to the active site in subunit 1, a binuclear center (BNC) formed by heme A3 and copper B (CU(B)). The BNC reduces molecular oxygen to 2 water molecules using 4 electrons from cytochrome c in the IMS and 4 protons from the mitochondrial matrix. The chain is Cytochrome c oxidase subunit 6B2 (Cox6b2) from Rattus norvegicus (Rat).